A 339-amino-acid chain; its full sequence is GTPase Obg (339 aa).

Positions 1 to 159 (MKFVDEAFVR…RELKLELKLL (159 aa)) constitute an Obg domain. Residues 127–147 (NTHFKSSTNRAPRRTTSGEEG) are disordered. The OBG-type G domain occupies 160 to 333 (ADVGLLGLPN…LCYDLMSFLE (174 aa)). Residues 166 to 173 (GLPNAGKS), 191 to 195 (FTTLY), 213 to 216 (DIPG), 283 to 286 (NKID), and 314 to 316 (SAI) each bind GTP. Residues S173 and T193 each coordinate Mg(2+).

Belongs to the TRAFAC class OBG-HflX-like GTPase superfamily. OBG GTPase family. Monomer. Mg(2+) serves as cofactor.

The protein resides in the cytoplasm. In terms of biological role, an essential GTPase which binds GTP, GDP and possibly (p)ppGpp with moderate affinity, with high nucleotide exchange rates and a fairly low GTP hydrolysis rate. Plays a role in control of the cell cycle, stress response, ribosome biogenesis and in those bacteria that undergo differentiation, in morphogenesis control. This Coxiella burnetii (strain CbuG_Q212) (Coxiella burnetii (strain Q212)) protein is GTPase Obg.